A 117-amino-acid polypeptide reads, in one-letter code: MPSPGTVCSLLLLGMLWLDLAMAGSSFLSPEHQRVQQRKESKKPPAKLQPRALAGWLRPEDGGQAEGAEDELEVRFNAPFDVGIKLSGVQYQQHSQALGKFLQDILWEEAKEAPADK.

The N-terminal stretch at 1–23 (MPSPGTVCSLLLLGMLWLDLAMA) is a signal peptide. S26 carries the O-decanoyl serine; alternate lipid modification. S26 carries the O-hexanoyl serine; alternate lipid modification. S26 carries the O-octanoyl serine; alternate lipid modification. The tract at residues 29–50 (SPEHQRVQQRKESKKPPAKLQP) is disordered. Over residues 31–43 (EHQRVQQRKESKK) the composition is skewed to basic and acidic residues. The propeptide at 52-75 (ALAGWLRPEDGGQAEGAEDELEVR) is removed in mature form. L98 carries the post-translational modification Leucine amide. A propeptide spans 99-117 (GKFLQDILWEEAKEAPADK) (removed in mature form).

It belongs to the motilin family. O-octanoylated by GOAT/MBOAT4. O-octanoylation or O-decanoylation is essential for ghrelin activity. The O-decanoylated forms Ghrelin-27-C10 and Ghrelin-28-C10 differ in the length of the carbon backbone of the carboxylic acid bound to Ser-26. A small fraction of ghrelin, ghrelin-28-C10:1, may be modified with a singly unsaturated carboxylic acid. Also O-acetylated and O-butyrylated on Ser-26 to minor levels. In terms of processing, amidation of Leu-98 is essential for obestatin activity. Highest level in stomach. All forms are found in serum as well. Other tissues compensate for the loss of ghrelin synthesis in the stomach following gastrectomy.

The protein resides in the secreted. Functionally, ghrelin is the ligand for growth hormone secretagogue receptor type 1 (GHSR). Induces the release of growth hormone from the pituitary. Has an appetite-stimulating effect, induces adiposity and stimulates gastric acid secretion. Involved in growth regulation. Its function is as follows. May be the ligand for GPR39. May have an appetite-reducing effect resulting in decreased food intake. May reduce gastric emptying activity and jejunal motility. The polypeptide is Appetite-regulating hormone (GHRL) (Homo sapiens (Human)).